The sequence spans 253 residues: RNA polymerase sigma factor SigI6 (253 aa).

The Polymerase core binding motif lies at 63–76 (EEYSVALLAFNEAI). Positions 203–222 (TLELLKLAKVSRRTIERNKK) form a DNA-binding region, H-T-H motif.

It belongs to the sigma-70 factor family. SigI subfamily. Interacts with RsgI6.

It localises to the cytoplasm. Negatively regulated by the anti-sigma-I factor RsgI6. Binding of the polysaccharide substrate to RsgI6 may lead to the release and activation of SigI6. Functionally, sigma factors are initiation factors that promote the attachment of RNA polymerase to specific initiation sites and are then released. This sigma factor is involved in regulation of cellulosomal genes via an external polysaccharide-sensing mechanism. Recognizes the predicted promoters associated with sigI6 itself, xyn11B, xyn10D, xyn10Z, xyn10Y, cel9V, cseP, sigI1, cipA, and rsgI5. In Acetivibrio thermocellus (strain ATCC 27405 / DSM 1237 / JCM 9322 / NBRC 103400 / NCIMB 10682 / NRRL B-4536 / VPI 7372) (Clostridium thermocellum), this protein is RNA polymerase sigma factor SigI6.